The following is a 586-amino-acid chain: Septin-9 (586 aa).

Residue methionine 1 is modified to N-acetylmethionine. A compositionally biased stretch (low complexity) spans 1-14; the sequence is MKKSYSGGTRTSSG. Disordered regions lie at residues 1 to 49, 62 to 108, and 134 to 268; these read MKKS…RVQT, KFQD…SRRT, and RAEV…PASR. Residues serine 22 and serine 30 each carry the phosphoserine modification. Residues threonine 38, threonine 42, and threonine 49 each carry the phosphothreonine modification. At lysine 62 the chain carries N6-acetyllysine. 4 positions are modified to phosphoserine: serine 82, serine 85, serine 89, and serine 96. Residues 134–151 show a composition bias toward basic and acidic residues; sequence RAEVLGHKTPEPAPRRTE. Residue threonine 142 is modified to Phosphothreonine. Tyrosine 278 carries the phosphotyrosine modification. One can recognise a Septin-type G domain in the interval 295–567; it reads QGFEFNIMVV…EAYRVKRLNE (273 aa). The interval 305 to 312 is G1 motif; it reads GQSGLGKS. 305 to 312 contacts GTP; that stretch reads GQSGLGKS. Phosphoserine occurs at positions 327 and 332. GTP is bound by residues threonine 339, glycine 365, 445-453, glycine 501, and arginine 516; that span reads KADTLTLEE. The interval 362 to 365 is G3 motif; it reads DTPG. Residues 444 to 447 are G4 motif; the sequence is AKAD.

It belongs to the TRAFAC class TrmE-Era-EngA-EngB-Septin-like GTPase superfamily. Septin GTPase family. In terms of assembly, septins polymerize into heterooligomeric protein complexes that form filaments, and associate with cellular membranes, actin filaments, and microtubules. GTPase activity is required for filament formation. Interacts with SEPTIN2, SEPTIN6, SEPTIN7, SEPTIN11 and SEPTIN14. Interacts with RTKN and ARHGEF18. In a mesenchymal cell line, Rho/RTKN signals cause disruption of wild-type septin filaments, but not of those containing isoform 2 variants HNA Trp-106 and Phe-111. In a mesenchymal cell line, isoform 2 variants HNA Trp-106 and Phe-111, but not wild type, form filaments with SEPTIN4. Widely expressed. Isoforms are differentially expressed in testes, kidney, liver heart, spleen, brain, peripheral blood leukocytes, skeletal muscle and kidney. Specific isoforms appear to demonstrate tissue specificity. Isoform 5 is the most highly expressed in fetal tissue. Isoform 1 is detected in all tissues except the brain and thymus, while isoform 2, isoform 3, and isoform 4 are detected at low levels in approximately half of the fetal tissues.

It is found in the cytoplasm. It localises to the cytoskeleton. Functionally, filament-forming cytoskeletal GTPase. May play a role in cytokinesis (Potential). May play a role in the internalization of 2 intracellular microbial pathogens, Listeria monocytogenes and Shigella flexneri. The polypeptide is Septin-9 (Homo sapiens (Human)).